A 394-amino-acid chain; its full sequence is Large ribosomal subunit protein mL44 (394 aa).

Residues 1–21 (MFRHVAQNLGSRNTSIQSYRL) constitute a mitochondrion transit peptide.

Belongs to the ribonuclease III family. Mitochondrion-specific ribosomal protein mL44 subfamily. Component of the mitochondrial large ribosomal subunit (mt-LSU).

It is found in the mitochondrion. Its function is as follows. Component of the mitochondrial ribosome. May have a function in the assembly/stability of nascent mitochondrial polypeptides exiting the ribosome. The chain is Large ribosomal subunit protein mL44 from Caenorhabditis elegans.